A 131-amino-acid chain; its full sequence is Large ribosomal subunit protein bL17 (131 aa).

It belongs to the bacterial ribosomal protein bL17 family. In terms of assembly, part of the 50S ribosomal subunit. Contacts protein L32.

This chain is Large ribosomal subunit protein bL17, found in Cupriavidus pinatubonensis (strain JMP 134 / LMG 1197) (Cupriavidus necator (strain JMP 134)).